The primary structure comprises 393 residues: MLRYLTAGESHGPQLTAIIEGIPAGLKISEETINVDLARRQGGYGRGGRMLIEKDQVQILSGVRWGETIGSPVTLCVVNRDWVNWQEKMSPHERHRDDKIRVTRSRPGHADLPGAMKYNHRDVRNILERSSARETAMRVAVGSVARAFLASFGVTVSGFVVELGGIKAERRGLSSDRLRELAAKSELATYDPEAEARMKAFIDSVKDAGDTAGGVVEVVVTGAPVGLGSHVQWDRKLDARLAMAVMSIQAIKGVEIGLGFETARRPGSQVHDEIYFDSSRIAHGEATGFFRKTNNAGGIEGGITNGEEIVIRAAMKPIPTLYKPLSSVDMLTKEPFEATVERSDVCAVPAAAVVAESVVAIEIASAFLEKFGGDSLAEIRRNYDGYLDYLRSF.

NADP(+) contacts are provided by Arg40 and Arg46. Residues 129–131 (RSS), 249–250 (QA), Gly301, 316–320 (KPIPT), and Arg342 each bind FMN.

This sequence belongs to the chorismate synthase family. Homotetramer. Requires FMNH2 as cofactor.

The enzyme catalyses 5-O-(1-carboxyvinyl)-3-phosphoshikimate = chorismate + phosphate. The protein operates within metabolic intermediate biosynthesis; chorismate biosynthesis; chorismate from D-erythrose 4-phosphate and phosphoenolpyruvate: step 7/7. Its function is as follows. Catalyzes the anti-1,4-elimination of the C-3 phosphate and the C-6 proR hydrogen from 5-enolpyruvylshikimate-3-phosphate (EPSP) to yield chorismate, which is the branch point compound that serves as the starting substrate for the three terminal pathways of aromatic amino acid biosynthesis. This reaction introduces a second double bond into the aromatic ring system. The chain is Chorismate synthase from Geobacter metallireducens (strain ATCC 53774 / DSM 7210 / GS-15).